Consider the following 586-residue polypeptide: Serine/threonine-protein phosphatase 2A 56 kDa regulatory subunit delta isoform (586 aa).

A disordered region spans residues 1-80 (MSPSPSSSGK…QSSSRFNLSK (80 aa)). Repeat copies occupy residues 21-22 (QP), 23-24 (QP), 25-26 (QP), 27-28 (QP), 29-30 (QP), and 31-32 (QP). The 8 X 2 AA approximate tandem repeats of Q-P stretch occupies residues 21–36 (QPQPQPQPQPQPQSQP). A compositionally biased stretch (pro residues) spans 23–35 (QPQPQPQPQPQSQ). A 7; approximate repeat occupies 33–34 (QS). Repeat 8 spans residues 35 to 36 (QP). The span at 36–45 (PPSSNKRPSN) shows a compositional bias: low complexity. T47 carries the phosphothreonine modification. A phosphoserine mark is found at S72, S73, and S74. The SH3-binding; class I motif lies at 507 to 514 (RAPPPLPP). The short motif at 532–549 (KRTVETEAVQMLKDIKKE) is the Nuclear localization signal element. Phosphoserine is present on residues S557 and S582.

The protein belongs to the phosphatase 2A regulatory subunit B56 family. In terms of assembly, PP2A consists of a common heterodimeric core enzyme, composed of a 36 kDa catalytic subunit (subunit C) and a 65 kDa constant regulatory subunit (PR65 or subunit A), that associates with a variety of regulatory subunits. Proteins that associate with the core dimer include three families of regulatory subunits B (the R2/B/PR55/B55, R3/B''/PR72/PR130/PR59 and R5/B'/B56 families), the 48 kDa variable regulatory subunit, viral proteins, and cell signaling molecules. Interacts with the PP2A A subunit PPP2R1A. Interacts with SGO1. Interacts with ADCY8. Highly expressed in brain.

It localises to the nucleus. The B regulatory subunit might modulate substrate selectivity and catalytic activity, and might also direct the localization of the catalytic enzyme to a particular subcellular compartment. The polypeptide is Serine/threonine-protein phosphatase 2A 56 kDa regulatory subunit delta isoform (PPP2R5D) (Oryctolagus cuniculus (Rabbit)).